The sequence spans 238 residues: Nuclear transcription factor Y subunit B-9 (238 aa).

The DNA-binding element occupies 64–70 (MPIANVI). A subunit association domain (SAD) region spans residues 91 to 102 (IQECVSEYISFV). A disordered region spans residues 203–238 (RYYQNGSSGQDESSVGGGSSSSINGMPAFDHYGQYK). Residues 208–227 (GSSGQDESSVGGGSSSSING) show a composition bias toward low complexity.

Belongs to the NFYB/HAP3 subunit family. In terms of assembly, heterotrimeric transcription factor composed of three components, NF-YA, NF-YB and NF-YC. NF-YB and NF-YC must interact and dimerize for NF-YA association and DNA binding. Interacts with PRN1. As to expression, expressed in green siliques. Present in etiolated seedlings.

The protein localises to the nucleus. Component of the NF-Y/HAP transcription factor complex. The NF-Y complex stimulates the transcription of various genes by recognizing and binding to a CCAAT motif in promoters. Acts as a central regulator of the embryogenesis. Required for the speciation of cotyledon identity and the completion of embryo maturation. Controls seed storage protein genes through the regulation of FUS3 and ABI3. Involved in the blue light (BL) and abscisic acid (ABA) signaling pathways. The protein is Nuclear transcription factor Y subunit B-9 (NFYB9) of Arabidopsis thaliana (Mouse-ear cress).